The following is a 439-amino-acid chain: MAISKIHSRYVYDSRGNPTVEVELTTEKGTFRSIVPSGASTGVHEALELRDGDKSKWLGKGVLKAVANVNDTIAPALIEANIDVADQAKIDEFLLKLDGTPNKAKLGANAILGVSLAAAKAGAAQKDVPLYKHIADISKAKEGKFVLPVPFQNVLNGGSHAGGDLAFQEFMIVPSGAPSFSEGLRIGSEVYHHLKSLTKKKYGQSAGNVGDEGGVAPDIKTAKEALDLIVSAIEAAGYTGQVDIAMDVASSEFYKDGLYDLDFKNPNSDKSKWITGPQLAELYEQLLNEYPIVSIEDPFAEDDWEAWSHFFSKVEGKTQIVGDDLTVTNPIRIKKAIETKAADALLLKVNQIGTLTESIQAANDSYAAGWGVMVSHRSGETEDTFIADLSVGIRSGQTKTGAPARSERLAKLNQILRIEEELGDKAIYAGKDFHKAHSL.

Positions 160 and 169 each coordinate substrate. Glutamate 212 (proton donor) is an active-site residue. Positions 247, 296, and 323 each coordinate Mg(2+). Substrate-binding residues include glutamate 296 and aspartate 323. Lysine 348 serves as the catalytic Proton acceptor. Substrate-binding positions include 375-378 and lysine 399; that span reads SHRS.

This sequence belongs to the enolase family. In terms of assembly, homodimer. Mg(2+) is required as a cofactor.

Its subcellular location is the cytoplasm. It catalyses the reaction (2R)-2-phosphoglycerate = phosphoenolpyruvate + H2O. Its pathway is carbohydrate degradation; glycolysis; pyruvate from D-glyceraldehyde 3-phosphate: step 4/5. In Rhodotorula mucilaginosa (Yeast), this protein is Enolase (ENO).